A 410-amino-acid polypeptide reads, in one-letter code: Multifunctional CCA protein (410 aa).

Gly8 and Arg11 together coordinate ATP. Positions 8 and 11 each coordinate CTP. Glu21 and Asp23 together coordinate Mg(2+). Arg91, Arg137, and Arg140 together coordinate ATP. Positions 91, 137, and 140 each coordinate CTP. Residues 228–329 (TGIHSLMALR…VKLLEQVDAF (102 aa)) enclose the HD domain.

Belongs to the tRNA nucleotidyltransferase/poly(A) polymerase family. Bacterial CCA-adding enzyme type 1 subfamily. As to quaternary structure, monomer. Can also form homodimers and oligomers. The cofactor is Mg(2+). Requires Ni(2+) as cofactor.

The enzyme catalyses a tRNA precursor + 2 CTP + ATP = a tRNA with a 3' CCA end + 3 diphosphate. The catalysed reaction is a tRNA with a 3' CCA end + 2 CTP + ATP = a tRNA with a 3' CCACCA end + 3 diphosphate. Its function is as follows. Catalyzes the addition and repair of the essential 3'-terminal CCA sequence in tRNAs without using a nucleic acid template. Adds these three nucleotides in the order of C, C, and A to the tRNA nucleotide-73, using CTP and ATP as substrates and producing inorganic pyrophosphate. tRNA 3'-terminal CCA addition is required both for tRNA processing and repair. Also involved in tRNA surveillance by mediating tandem CCA addition to generate a CCACCA at the 3' terminus of unstable tRNAs. While stable tRNAs receive only 3'-terminal CCA, unstable tRNAs are marked with CCACCA and rapidly degraded. The protein is Multifunctional CCA protein of Legionella pneumophila (strain Paris).